The following is a 432-amino-acid chain: N-acylneuraminate cytidylyltransferase (432 aa).

Methionine 1 carries the N-acetylmethionine modification. The tract at residues 1-38 (MDALEKGAATSGPAPRGRPSRGRPPKLQRSRGAGRGLE) is disordered. The short motif at 15-31 (PRGRPSRGRPPKLQRSR) is the BC1 motif element. The span at 18–29 (RPSRGRPPKLQR) shows a compositional bias: basic residues. Omega-N-methylarginine occurs at positions 35 and 50. 6 residues coordinate substrate: arginine 50, asparagine 60, arginine 109, serine 118, serine 120, and glutamine 141. Positions 198–204 (KRPRRQD) match the BC2 motif motif. The active site involves arginine 199. A BC3 motif motif is present at residues 267–274 (KEKLKEIK).

Belongs to the CMP-NeuNAc synthase family. In terms of assembly, homotetramer; the active enzyme is formed by a dimer of dimers. In terms of tissue distribution, liver.

Its subcellular location is the nucleus. It carries out the reaction an N-acylneuraminate + CTP = a CMP-N-acyl-beta-neuraminate + diphosphate. Its pathway is amino-sugar metabolism; N-acetylneuraminate metabolism. Functionally, catalyzes the activation of N-acetylneuraminic acid (NeuNAc) to cytidine 5'-monophosphate N-acetylneuraminic acid (CMP-NeuNAc), a substrate required for the addition of sialic acid. Has some activity toward NeuNAc, N-glycolylneuraminic acid (Neu5Gc) or 2-keto-3-deoxy-D-glycero-D-galacto-nononic acid (KDN). The protein is N-acylneuraminate cytidylyltransferase (Cmas) of Rattus norvegicus (Rat).